Here is a 460-residue protein sequence, read N- to C-terminus: 1-aminocyclopropane-1-carboxylate synthase 11 (460 aa).

Substrate is bound by residues E45 and Y83. K267 is modified (N6-(pyridoxal phosphate)lysine).

It belongs to the class-I pyridoxal-phosphate-dependent aminotransferase family. In terms of assembly, homodimer and heterodimer. In vivo, the relevance of heterodimerization with other ACS enzymes is however unsure. Interacts with GRF3. Pyridoxal 5'-phosphate serves as cofactor. Post-translationally, may be processed at its C-terminus. Expressed in roots.

It carries out the reaction S-adenosyl-L-methionine = 1-aminocyclopropane-1-carboxylate + S-methyl-5'-thioadenosine + H(+). The protein operates within alkene biosynthesis; ethylene biosynthesis via S-adenosyl-L-methionine; ethylene from S-adenosyl-L-methionine: step 1/2. Its function is as follows. 1-aminocyclopropane-1-carboxylate synthase (ACS) enzymes catalyze the conversion of S-adenosyl-L-methionine (SAM) into 1-aminocyclopropane-1-carboxylate (ACC), a direct precursor of ethylene. This chain is 1-aminocyclopropane-1-carboxylate synthase 11 (ACS11), found in Arabidopsis thaliana (Mouse-ear cress).